Here is a 245-residue protein sequence, read N- to C-terminus: Major prion protein (245 aa).

Residues 1-22 form the signal peptide; that stretch reads MANLGCWMLVVFVATWSDLGLC. An interaction with GRB2, ERI3 and SYN1 region spans residues 23-222; sequence KKRPKPGGWN…ESQAYYQRGS (200 aa). A disordered region spans residues 25 to 102; the sequence is RPKPGGWNTG…KPSKPKTSMK (78 aa). 4 consecutive repeat copies span residues 51–59, 60–67, 68–75, and 76–83. A 4 X 8 AA tandem repeats of P-H-G-G-G-W-G-Q region spans residues 51–83; the sequence is PQGGGGWGQPHGGGWGQPHGGGWGQPHGGGWGQ. Residues 52 to 87 show a composition bias toward gly residues; the sequence is QGGGGWGQPHGGGWGQPHGGGWGQPHGGGWGQGGGT. Cu(2+) contacts are provided by G54, G55, H61, G62, G63, H69, G70, G71, H77, G78, and G79. Over residues 90–101 the composition is skewed to basic residues; sequence QWHKPSKPKTSM. C171 and C206 are oxidised to a cystine. Residues N173 and N189 are each glycosylated (N-linked (GlcNAc...) asparagine). The GPI-anchor amidated serine moiety is linked to residue S222. A propeptide spans 223–245 (removed in mature form); the sequence is SMVLFSSPPVILLISFLIFLIVG.

It belongs to the prion family. As to quaternary structure, monomer and homodimer. Has a tendency to aggregate into amyloid fibrils containing a cross-beta spine, formed by a steric zipper of superposed beta-strands. Soluble oligomers may represent an intermediate stage on the path to fibril formation. Copper binding may promote oligomerization. Interacts with GRB2, APP, ERI3/PRNPIP and SYN1. Mislocalized cytosolically exposed PrP interacts with MGRN1; this interaction alters MGRN1 subcellular location and causes lysosomal enlargement. Interacts with KIAA1191.

The protein resides in the cell membrane. The protein localises to the golgi apparatus. Functionally, its primary physiological function is unclear. Has cytoprotective activity against internal or environmental stresses. May play a role in neuronal development and synaptic plasticity. May be required for neuronal myelin sheath maintenance. May play a role in iron uptake and iron homeostasis. Soluble oligomers are toxic to cultured neuroblastoma cells and induce apoptosis (in vitro). Association with GPC1 (via its heparan sulfate chains) targets PRNP to lipid rafts. Also provides Cu(2+) or Zn(2+) for the ascorbate-mediated GPC1 deaminase degradation of its heparan sulfate side chains. The sequence is that of Major prion protein (PRNP) from Cercopithecus diana (Diana monkey).